The following is a 503-amino-acid chain: Glutamate--tRNA ligase 1 (503 aa).

Positions 17–27 match the 'HIGH' region motif; sequence PSPTGFLHIGN. The 'KMSKS' region signature appears at 261–265; it reads KLSKR. ATP is bound at residue Lys-264.

The protein belongs to the class-I aminoacyl-tRNA synthetase family. Glutamate--tRNA ligase type 1 subfamily. Monomer.

The protein localises to the cytoplasm. It carries out the reaction tRNA(Glu) + L-glutamate + ATP = L-glutamyl-tRNA(Glu) + AMP + diphosphate. In terms of biological role, catalyzes the attachment of glutamate to tRNA(Glu) in a two-step reaction: glutamate is first activated by ATP to form Glu-AMP and then transferred to the acceptor end of tRNA(Glu). The polypeptide is Glutamate--tRNA ligase 1 (Levilactobacillus brevis (strain ATCC 367 / BCRC 12310 / CIP 105137 / JCM 1170 / LMG 11437 / NCIMB 947 / NCTC 947) (Lactobacillus brevis)).